The chain runs to 124 residues: Large ribosomal subunit protein bL12 (124 aa).

It belongs to the bacterial ribosomal protein bL12 family. As to quaternary structure, homodimer. Part of the ribosomal stalk of the 50S ribosomal subunit. Forms a multimeric L10(L12)X complex, where L10 forms an elongated spine to which 2 to 4 L12 dimers bind in a sequential fashion. Binds GTP-bound translation factors.

Functionally, forms part of the ribosomal stalk which helps the ribosome interact with GTP-bound translation factors. Is thus essential for accurate translation. This Burkholderia ambifaria (strain MC40-6) protein is Large ribosomal subunit protein bL12.